Reading from the N-terminus, the 396-residue chain is MKSLCLLAIVAVVSAEVYFKEEFNDASWEKRWVQSKHKDDFGAFKLSAGKFFDVESRDQGIQTSQDAKFYSRAAKFDKEFSNKGKTLVIQYTVKHEQGIDCGGGYVKVMRGDADLADFHGETPYNVMFGPDICGPTRRVHVILNYKGENKLIKKEITCKSDELTHLYTLILNADNTYEVKIDGESAQTGSLEEDWDLLPAKKIKDPDAKKPEDWDEREYIDDAEDVKPEDWEKPEHIPDPDAKKPEDWDDEMDGEWEPPMIDNPEYKGEWKPKQIKNPAYKGKWIHPEIENPEYTPDDELYLYENWGAIGFDLWQVKSGTIFDNVLITDSVEEAEAHAAETFDKLKTVEKEKKEKADEEARKVEEEARKKAEEEKEAKKDDDEEEEKEEEEGHDEL.

The N-terminal stretch at 1–15 (MKSLCLLAIVAVVSA) is a signal peptide. C101 and C133 form a disulfide bridge. The an alpha-D-glucoside site is built by Y105, K107, Y124, and D131. 7 consecutive repeat copies span residues 186–197 (AQTGSLEEDWDL), 205–216 (DPDAKKPEDWDE), 222–233 (DAEDVKPEDWEK), 239–250 (DPDAKKPEDWDD), 254–264 (GEWEPPMIDNP), 268–278 (GEWKPKQIKNP), and 282–292 (GKWIHPEIENP). A 4 X approximate repeats region spans residues 186–250 (AQTGSLEEDW…DAKKPEDWDD (65 aa)). Positions 193–301 (EDWDLLPAKK…PEYTPDDELY (109 aa)) are P-domain. The span at 202–212 (KIKDPDAKKPE) shows a compositional bias: basic and acidic residues. The interval 202–250 (KIKDPDAKKPEDWDEREYIDDAEDVKPEDWEKPEHIPDPDAKKPEDWDD) is disordered. A compositionally biased stretch (acidic residues) spans 213-224 (DWDEREYIDDAE). Over residues 225–246 (DVKPEDWEKPEHIPDPDAKKPE) the composition is skewed to basic and acidic residues. The segment at 254–292 (GEWEPPMIDNPEYKGEWKPKQIKNPAYKGKWIHPEIENP) is 3 X approximate repeats. The segment at 302-396 (LYENWGAIGF…KEEEEGHDEL (95 aa)) is C-domain. D312 serves as a coordination point for an alpha-D-glucoside. Basic and acidic residues predominate over residues 342-380 (FDKLKTVEKEKKEKADEEARKVEEEARKKAEEEKEAKKD). Positions 342–396 (FDKLKTVEKEKKEKADEEARKVEEEARKKAEEEKEAKKDDDEEEEKEEEEGHDEL) are disordered. The span at 381–396 (DDEEEEKEEEEGHDEL) shows a compositional bias: acidic residues. Positions 393–396 (HDEL) match the Prevents secretion from ER motif.

It belongs to the calreticulin family.

Its subcellular location is the endoplasmic reticulum lumen. Its function is as follows. Molecular calcium-binding chaperone promoting folding, oligomeric assembly and quality control in the ER via the calreticulin/calnexin cycle. This lectin may interact transiently with almost all of the monoglucosylated glycoproteins that are synthesized in the ER. Probably by controlling the folding of extracellular matrix protein unc-52/Perlecan, may play a role in the formation of fibrous organelles, a hemidesmosome-like structure attaching muscles to the epidermis. Protects dopaminergic neurons against oxidative stress-induced neurodegeneration. The chain is Calreticulin (crt-1) from Caenorhabditis briggsae.